Reading from the N-terminus, the 419-residue chain is Serine--tRNA ligase (419 aa).

225–227 (TAE) serves as a coordination point for L-serine. 256–258 (RKE) provides a ligand contact to ATP. Residue Glu-279 coordinates L-serine. 343–346 (EISS) contributes to the ATP binding site. Residue Ser-378 participates in L-serine binding.

Belongs to the class-II aminoacyl-tRNA synthetase family. Type-1 seryl-tRNA synthetase subfamily. Homodimer. The tRNA molecule binds across the dimer.

Its subcellular location is the cytoplasm. It catalyses the reaction tRNA(Ser) + L-serine + ATP = L-seryl-tRNA(Ser) + AMP + diphosphate + H(+). The catalysed reaction is tRNA(Sec) + L-serine + ATP = L-seryl-tRNA(Sec) + AMP + diphosphate + H(+). The protein operates within aminoacyl-tRNA biosynthesis; selenocysteinyl-tRNA(Sec) biosynthesis; L-seryl-tRNA(Sec) from L-serine and tRNA(Sec): step 1/1. Catalyzes the attachment of serine to tRNA(Ser). Is also able to aminoacylate tRNA(Sec) with serine, to form the misacylated tRNA L-seryl-tRNA(Sec), which will be further converted into selenocysteinyl-tRNA(Sec). This chain is Serine--tRNA ligase, found in Pelagibacter ubique (strain HTCC1062).